Consider the following 93-residue polypeptide: U12-lycotoxin-Ls1d (93 aa).

The first 18 residues, Met1–Ser18, serve as a signal peptide directing secretion. The propeptide occupies Glu19–Arg38.

This sequence belongs to the neurotoxin 31 family. Contains 5 disulfide bonds. As to expression, expressed by the venom gland.

The protein localises to the secreted. In Lycosa singoriensis (Wolf spider), this protein is U12-lycotoxin-Ls1d.